Reading from the N-terminus, the 315-residue chain is Olfactory receptor 56A3 (315 aa).

Residues 1-29 are Extracellular-facing; the sequence is MTTHRNDTLSTEASDFLLNCFVRSPSWQH. N-linked (GlcNAc...) asparagine glycosylation occurs at Asn-6. The chain crosses the membrane as a helical span at residues 30–50; sequence WLSLPLSLLFLLAVGANTTLL. The Cytoplasmic segment spans residues 51–58; that stretch reads MTIWLEAS. Residues 59 to 79 traverse the membrane as a helical segment; the sequence is LHQPLYYLLSLLSLLDIVLCL. Residues 80 to 103 are Extracellular-facing; that stretch reads TVIPKVLTIFWFDLRPISFPACFL. Cys-101 and Cys-193 are disulfide-bonded. A helical transmembrane segment spans residues 104-124; the sequence is QMYIMNCFLAMESCTFMVMAY. Residues 125–143 lie on the Cytoplasmic side of the membrane; that stretch reads DRYVAICHPLRYPSIITDH. A helical membrane pass occupies residues 144-164; the sequence is FVVKAAMFILTRNVLMTLPIP. The Extracellular portion of the chain corresponds to 165–200; it reads ILSAQLRYCGRNVIENCICANMSVSRLSCDDVTINH. A glycan (N-linked (GlcNAc...) asparagine) is linked at Asn-185. A helical membrane pass occupies residues 201–221; sequence LYQFAGGWTLLGSDLILIFLS. Residues 222 to 241 are Cytoplasmic-facing; it reads YTFILRAVLRLKAEGAVAKA. A helical transmembrane segment spans residues 242 to 262; that stretch reads LSTCGSHFMLILFFSTILLVF. Residues 263–277 are Extracellular-facing; sequence VLTHVAKKKVSPDVP. A helical membrane pass occupies residues 278–298; it reads VLLNVLHHVIPAALNPIIYGV. Residues 299-315 are Cytoplasmic-facing; it reads RTQEIKQGMQRLLKKGC.

Belongs to the G-protein coupled receptor 1 family.

The protein resides in the cell membrane. Its function is as follows. Odorant receptor. The polypeptide is Olfactory receptor 56A3 (OR56A3) (Homo sapiens (Human)).